The sequence spans 312 residues: Secreted RxLR effector protein 14 (312 aa).

The first 20 residues, 1-20 (MHSFKLLLALIVAICTSCDA), serve as a signal peptide directing secretion. A RxLR-dEER motif is present at residues 46–61 (RLLRAKDGKVRADEER).

This sequence belongs to the RxLR effector family.

It is found in the secreted. The protein localises to the host nucleus. In terms of biological role, secreted effector that completely suppresses the host cell death induced by cell death-inducing proteins. This is Secreted RxLR effector protein 14 from Plasmopara viticola (Downy mildew of grapevine).